The primary structure comprises 301 residues: POU domain, class 6, transcription factor 1 (301 aa).

2 consecutive repeat copies span residues 11 to 17 (NAQGQVI) and 50 to 56 (NAQGQVI). The interval 11–56 (NAQGQVIGALPWVVNSASVATPAPAQSLQVQAVTPQLLLNAQGQVI) is 2 X 7 AA repeats of N-A-Q-G-Q-V-I. Residues 66-88 (QPVAVRKPSTPESPAKSEVQPIQ) are disordered. Positions 139-213 (EDGINLEEIR…VLEKWLNEAE (75 aa)) constitute a POU-specific domain. The segment at residues 234-293 (KRKRRTSFTPQAIEALNAYFEKNPLPTGQEITEIAKELNYDREVVRVWFCNRRQTLKNTS) is a DNA-binding region (homeobox).

Belongs to the POU transcription factor family. Class-6 subfamily. As to expression, in the embryo, widely expressed, with highest levels in the developing brain and spinal cord. In the adult, mostly found in the brain, where it is diffusely expressed with the exception of an enrichment in layer IV of the neocortex. Also found in kidney, lung, heart, adrenal, skin, and placenta. Low levels in spleen, muscle, liver, anterior pituitary, testis and ovary.

The protein localises to the nucleus. Transcription factor that binds preferentially to a variant of the octamer motif (5'-ATGATAAT-3'). In Rattus norvegicus (Rat), this protein is POU domain, class 6, transcription factor 1 (Pou6f1).